A 117-amino-acid chain; its full sequence is MNKKETRLRRARKTRAKLAELKAVRLAVFRTNCHIYAQVISGCGSRVLAAASTVESAVRSQVANGGNKQAAEVVGKLIAERAKAAGIETVAFDRSGFLYHGRVKALAEAAREGGLKF.

It belongs to the universal ribosomal protein uL18 family. Part of the 50S ribosomal subunit; part of the 5S rRNA/L5/L18/L25 subcomplex. Contacts the 5S and 23S rRNAs.

Functionally, this is one of the proteins that bind and probably mediate the attachment of the 5S RNA into the large ribosomal subunit, where it forms part of the central protuberance. In Azoarcus sp. (strain BH72), this protein is Large ribosomal subunit protein uL18.